Consider the following 447-residue polypeptide: Multicopper oxidase mco (447 aa).

Basic and acidic residues predominate over residues 1–25 (MMDMKENDQKRNDMMDMKSHDERKN). A disordered region spans residues 1–43 (MMDMKENDQKRNDMMDMKSHDERKNLNSSQGKNEITFPKVLDP). The Cu cation site is built by His107, His109, His147, His149, His375, His378, His380, His428, Cys429, His430, His434, and Met439.

Belongs to the multicopper oxidase family. Cu cation is required as a cofactor.

The protein resides in the cytoplasm. Functionally, may be involved in copper homeostasis and oxidative stress response. Oxidizes the substrate 3,3'-dimethoxybenzidine in vitro. Also possesses low levels of phenoloxidase and ferroxidase activities. This is Multicopper oxidase mco (mco) from Staphylococcus aureus.